The primary structure comprises 254 residues: Probable protein S-acyltransferase 15 (254 aa).

Helical transmembrane passes span 1-21 and 28-48; these read MGFV…GLQS and ALLF…CVLV. The region spanning 75-125 is the DHHC domain; the sequence is RKCDKCFAYKPLRTHHCRVCRRCVLKMDHHCLWINNCVGYANYKAFFILVF. The active-site S-palmitoyl cysteine intermediate is Cys105. 2 helical membrane passes run 119 to 139 and 164 to 184; these read AFFI…VLLV and IFMI…IYLI.

The protein belongs to the DHHC palmitoyltransferase family.

It is found in the endoplasmic reticulum membrane. The protein localises to the cytoplasmic vesicle membrane. The catalysed reaction is L-cysteinyl-[protein] + hexadecanoyl-CoA = S-hexadecanoyl-L-cysteinyl-[protein] + CoA. In terms of biological role, palmitoyl acyltransferase. This chain is Probable protein S-acyltransferase 15 (PAT15), found in Arabidopsis thaliana (Mouse-ear cress).